We begin with the raw amino-acid sequence, 259 residues long: Ribosomal RNA small subunit methyltransferase J (259 aa).

S-adenosyl-L-methionine is bound by residues 101 to 102 (RD), 117 to 118 (ER), 153 to 154 (SS), and aspartate 176.

The protein belongs to the methyltransferase superfamily. RsmJ family.

Its subcellular location is the cytoplasm. It catalyses the reaction guanosine(1516) in 16S rRNA + S-adenosyl-L-methionine = N(2)-methylguanosine(1516) in 16S rRNA + S-adenosyl-L-homocysteine + H(+). Its function is as follows. Specifically methylates the guanosine in position 1516 of 16S rRNA. The polypeptide is Ribosomal RNA small subunit methyltransferase J (Vibrio campbellii (strain ATCC BAA-1116)).